The sequence spans 179 residues: Guanosine-3',5'-bis(diphosphate) 3'-pyrophosphohydrolase MESH1 (179 aa).

Gly-2 carries the post-translational modification N-acetylglycine. Lys-25 carries the post-translational modification N6-acetyllysine. In terms of domain architecture, HD spans 32–127 (YINHPIGVAR…VKLADKLYNL (96 aa)). 3 residues coordinate Mn(2+): His-35, His-61, and Asp-62. Catalysis depends on nucleophile residues Glu-65 and Asp-66. Lys-97 carries the post-translational modification N6-acetyllysine. Residue Asp-122 participates in Mn(2+) binding. Lys-123 is subject to N6-acetyllysine.

It belongs to the MESH1 family. It depends on Mn(2+) as a cofactor.

It catalyses the reaction guanosine 3',5'-bis(diphosphate) + H2O = GDP + diphosphate + H(+). In terms of biological role, ppGpp hydrolyzing enzyme involved in starvation response. The polypeptide is Guanosine-3',5'-bis(diphosphate) 3'-pyrophosphohydrolase MESH1 (HDDC3) (Homo sapiens (Human)).